Reading from the N-terminus, the 263-residue chain is Probable ribosomal RNA small subunit methyltransferase A (263 aa).

Leucine 12, glycine 37, glutamate 58, aspartate 83, and asparagine 100 together coordinate S-adenosyl-L-methionine.

It belongs to the class I-like SAM-binding methyltransferase superfamily. rRNA adenine N(6)-methyltransferase family. RsmA subfamily.

It is found in the cytoplasm. In terms of biological role, specifically dimethylates two adjacent adenosines in the loop of a conserved hairpin near the 3'-end of 16S rRNA in the 30S particle. May play a critical role in biogenesis of 30S subunits. This is Probable ribosomal RNA small subunit methyltransferase A from Methanococcus maripaludis (strain C6 / ATCC BAA-1332).